Consider the following 413-residue polypeptide: Synaptosomal-associated protein 47 (413 aa).

In terms of domain architecture, t-SNARE coiled-coil homology 1 spans 109–171 (AANIPSHVTR…DVADRLLTEL (63 aa)). The segment at 321–342 (RHAASRPKGCTPHRELPTGGQE) is disordered. The 63-residue stretch at 350–412 (KNLPLFSEGE…DKQNRRMRKL (63 aa)) folds into the t-SNARE coiled-coil homology 2 domain.

It belongs to the SVAP1 family. Associates with the BLOC-1 complex. Interacts with BLOC1S6. Forms a complex containing SNAP47, VAMP2 and STX1A. Ubiquitously expressed with the most abundant expression in the brain. In brain, most highly expressed in the glomerular layer of the olfactory bulb, the cortex, striatum, hippocampus, and colliculi (at protein level).

It localises to the endomembrane system. The protein resides in the cytoplasm. It is found in the perinuclear region. May play a role in intracellular membrane fusion. This Mus musculus (Mouse) protein is Synaptosomal-associated protein 47 (Snap47).